The following is a 194-amino-acid chain: Large ribosomal subunit protein uL24c (194 aa).

The transit peptide at 1–50 directs the protein to the chloroplast; it reads MVAMAMASLQSSMSSLSLSSNSFLGQPLSPITLSPFLQGKPTEKKCLIVM.

It belongs to the universal ribosomal protein uL24 family. Part of the 50S ribosomal subunit.

The protein localises to the plastid. Its subcellular location is the chloroplast. In terms of biological role, one of two assembly initiator proteins, it binds directly to the 5'-end of the 23S rRNA, where it nucleates assembly of the 50S subunit. The sequence is that of Large ribosomal subunit protein uL24c (RPL24) from Pisum sativum (Garden pea).